The chain runs to 118 residues: Basic phospholipase A2 homolog 1 (118 aa).

Disulfide bonds link cysteine 11–cysteine 71, cysteine 27–cysteine 117, cysteine 29–cysteine 45, cysteine 44–cysteine 98, cysteine 51–cysteine 91, cysteine 60–cysteine 84, and cysteine 78–cysteine 89. An important for membrane-damaging activities in eukaryotes and bacteria; heparin-binding region spans residues asparagine 106–lysine 118.

It belongs to the phospholipase A2 family. Group I subfamily. D49 sub-subfamily. As to expression, expressed by the venom gland.

It localises to the secreted. This is Basic phospholipase A2 homolog 1 from Laticauda colubrina (Yellow-lipped sea krait).